Reading from the N-terminus, the 397-residue chain is Acetate kinase 1 (397 aa).

Asn-8 provides a ligand contact to Mg(2+). Lys-15 is an ATP binding site. Arg-89 serves as a coordination point for substrate. The Proton donor/acceptor role is filled by Asp-146. Residues 206–210, 281–283, and 329–333 contribute to the ATP site; these read HLGNG, DFR, and GVGEN. Residue Glu-380 coordinates Mg(2+).

This sequence belongs to the acetokinase family. In terms of assembly, homodimer. Mg(2+) serves as cofactor. Requires Mn(2+) as cofactor.

The protein resides in the cytoplasm. It carries out the reaction acetate + ATP = acetyl phosphate + ADP. Its pathway is metabolic intermediate biosynthesis; acetyl-CoA biosynthesis; acetyl-CoA from acetate: step 1/2. Its function is as follows. Catalyzes the formation of acetyl phosphate from acetate and ATP. Can also catalyze the reverse reaction. In Listeria monocytogenes serotype 4b (strain F2365), this protein is Acetate kinase 1.